A 249-amino-acid polypeptide reads, in one-letter code: 2,3-bisphosphoglycerate-dependent phosphoglycerate mutase (249 aa).

Substrate is bound by residues 9–16 (RHGQSQWN), 22–23 (TG), arginine 61, 88–91 (ERHY), lysine 99, 115–116 (RR), and 184–185 (GN). Histidine 10 (tele-phosphohistidine intermediate) is an active-site residue. Catalysis depends on glutamate 88, which acts as the Proton donor/acceptor.

Belongs to the phosphoglycerate mutase family. BPG-dependent PGAM subfamily. Homodimer.

It carries out the reaction (2R)-2-phosphoglycerate = (2R)-3-phosphoglycerate. Its pathway is carbohydrate degradation; glycolysis; pyruvate from D-glyceraldehyde 3-phosphate: step 3/5. In terms of biological role, catalyzes the interconversion of 2-phosphoglycerate and 3-phosphoglycerate. The chain is 2,3-bisphosphoglycerate-dependent phosphoglycerate mutase from Xanthomonas oryzae pv. oryzae (strain MAFF 311018).